Reading from the N-terminus, the 426-residue chain is MSKSENLYSAARELLPGGVNSPVRAFTGVGGTPLFIEKADGAYLYDVDGKAYIDYVGSWGPMVLGHNHPAIRNAVIEAAERGLSFGAPTEMEVKMAQLVTELVPTMDMVRMVNSGTEATMSAIRLARGFTGRDKIIKFEGCYHGHADCLLVKAGSGALTLGQPNSPGVPADFAKHTLTCTYNDLASVRAAFEQYPQEIACIIVEPVAGNMNCVPPQPEFLPGLRALCDEFGALLIIDEVMTGFRVALAGAQDYYGVVPDLTCLGKIIGGGMPVGAFGGRRDVMDALAPTGPVYQAGTLSGNPIAMAAGFACLNEVAQPGVHETLDELTTRLAEGLLEAAEEAGTPLVVNHVGGMFGIFFTDAESVTCYQDVMACDVERFKRFFHMMLDEGVYLAPSAFEAGFMSVAHSMEDINNTIDAARRVFAKL.

Lys-265 carries the post-translational modification N6-(pyridoxal phosphate)lysine.

This sequence belongs to the class-III pyridoxal-phosphate-dependent aminotransferase family. HemL subfamily. As to quaternary structure, homodimer. The cofactor is pyridoxal 5'-phosphate.

The protein resides in the cytoplasm. The catalysed reaction is (S)-4-amino-5-oxopentanoate = 5-aminolevulinate. Its pathway is porphyrin-containing compound metabolism; protoporphyrin-IX biosynthesis; 5-aminolevulinate from L-glutamyl-tRNA(Glu): step 2/2. This is Glutamate-1-semialdehyde 2,1-aminomutase from Shigella boydii serotype 4 (strain Sb227).